Reading from the N-terminus, the 138-residue chain is Large ribosomal subunit protein uL16m (138 aa).

It belongs to the universal ribosomal protein uL16 family.

The protein localises to the mitochondrion. This chain is Large ribosomal subunit protein uL16m (RPL16), found in Chondrus crispus (Carrageen Irish moss).